Reading from the N-terminus, the 148-residue chain is Ribonuclease H (148 aa).

The RNase H type-1 domain occupies 2-143; sequence TADIIYIYSD…ADVLANQGVL (142 aa). 4 residues coordinate Mg(2+): D11, E49, D71, and D135.

Belongs to the RNase H family. As to quaternary structure, monomer. The cofactor is Mg(2+).

The protein resides in the cytoplasm. It carries out the reaction Endonucleolytic cleavage to 5'-phosphomonoester.. Endonuclease that specifically degrades the RNA of RNA-DNA hybrids. This is Ribonuclease H from Thiobacillus denitrificans (strain ATCC 25259 / T1).